The following is a 240-amino-acid chain: UDP-2,3-diacylglucosamine hydrolase (240 aa).

5 residues coordinate Mn(2+): Asp-8, His-10, Asp-41, Asn-79, and His-114. 79 to 80 is a binding site for substrate; sequence NR. Substrate is bound by residues Asp-122, Ser-160, Asn-164, Lys-167, and His-195. His-195 and His-197 together coordinate Mn(2+).

Belongs to the LpxH family. It depends on Mn(2+) as a cofactor.

Its subcellular location is the cell inner membrane. The enzyme catalyses UDP-2-N,3-O-bis[(3R)-3-hydroxytetradecanoyl]-alpha-D-glucosamine + H2O = 2-N,3-O-bis[(3R)-3-hydroxytetradecanoyl]-alpha-D-glucosaminyl 1-phosphate + UMP + 2 H(+). Its pathway is glycolipid biosynthesis; lipid IV(A) biosynthesis; lipid IV(A) from (3R)-3-hydroxytetradecanoyl-[acyl-carrier-protein] and UDP-N-acetyl-alpha-D-glucosamine: step 4/6. Hydrolyzes the pyrophosphate bond of UDP-2,3-diacylglucosamine to yield 2,3-diacylglucosamine 1-phosphate (lipid X) and UMP by catalyzing the attack of water at the alpha-P atom. Involved in the biosynthesis of lipid A, a phosphorylated glycolipid that anchors the lipopolysaccharide to the outer membrane of the cell. This Escherichia coli (strain UTI89 / UPEC) protein is UDP-2,3-diacylglucosamine hydrolase.